The chain runs to 448 residues: Tapasin (448 aa).

Positions 1–20 (MKSLSLLLAVALGLATAVSA) are cleaved as a signal peptide. The Lumenal segment spans residues 21 to 414 (GPAVIECWFV…LSGPSLEDSI (394 aa)). A disulfide bond links C27 and C91. An N-linked (GlcNAc...) asparagine glycan is attached at N253. Positions 292-399 (PKVSLMPATL…PASGRSAEVT (108 aa)) constitute an Ig-like C1-type domain. C315 and C382 are joined by a disulfide. Residues 415 to 435 (GLFLSAFFLLGLFKALGWAAV) form a helical membrane-spanning segment. Over 436-448 (YLSTCKDSKKKAE) the chain is Cytoplasmic.

In terms of assembly, heterodimer with PDIA3; disulfide-linked. Obligatory mediator for the interaction between newly assembled MHC class I molecules, calreticulin, PDIA3 and TAP. Up to 4 MHC class I/tapasin complexes bind to 1 TAP. Interacts with HLA-G-B2M complex; this interaction is required for loading of high affinity peptides. On its own or as part of MHC class I peptide loading complex, interacts with ligand-free MR1 or MR1-B2M complex, providing for stable MR1 pools ready for metabolite antigen processing.

The protein resides in the endoplasmic reticulum membrane. Its function is as follows. Involved in the association of MHC class I with transporter associated with antigen processing (TAP) and in the assembly of MHC class I with peptide (peptide loading). The sequence is that of Tapasin (TAPBP) from Chlorocebus aethiops (Green monkey).